Here is a 294-residue protein sequence, read N- to C-terminus: Elongation factor Ts (294 aa).

The involved in Mg(2+) ion dislocation from EF-Tu stretch occupies residues 81-84 (TDFV).

The protein belongs to the EF-Ts family.

The protein resides in the cytoplasm. Associates with the EF-Tu.GDP complex and induces the exchange of GDP to GTP. It remains bound to the aminoacyl-tRNA.EF-Tu.GTP complex up to the GTP hydrolysis stage on the ribosome. The sequence is that of Elongation factor Ts from Levilactobacillus brevis (strain ATCC 367 / BCRC 12310 / CIP 105137 / JCM 1170 / LMG 11437 / NCIMB 947 / NCTC 947) (Lactobacillus brevis).